We begin with the raw amino-acid sequence, 628 residues long: Probable potassium transport system protein Kup (628 aa).

Helical transmembrane passes span 20-40, 63-83, 110-130, 151-171, 178-198, 212-232, 256-276, 296-316, 346-366, 375-395, 398-418, and 422-442; these read ALLTLGALGVVFGDIGTSPLY, IISMVLWTITLIVTVKYVMLV, FVAVAGMLGAALFYGDVVITP, FILPISLAVLIAIFAIQPLGT, FGPIMLLWFVTLAGLGIPQII, ALGLIVAEPFQAFVLLGAVVL, WFCVVMPALILTYLGQGALVI, IPLVILATIATVIASQAVISG, IYMPLVNGLLFVSVMVVVLVF, AYGLAVTGTLVLVSVLYLIYV, TWWKTALFIVFIGIPEVLLFA, and TKIHDGGWLPLLTAAVLIVVM.

It belongs to the HAK/KUP transporter (TC 2.A.72) family.

It is found in the cell membrane. It carries out the reaction K(+)(in) + H(+)(in) = K(+)(out) + H(+)(out). Functionally, transport of potassium into the cell. Likely operates as a K(+):H(+) symporter. The chain is Probable potassium transport system protein Kup from Corynebacterium glutamicum (strain R).